The chain runs to 199 residues: OPA3-like protein (199 aa).

A coiled-coil region spans residues 98–141; it reads RSSEKDKKKEEALQNRFKNLEEKLEVQQETINNLTNVIEAIQSS.

Belongs to the OPA3 family.

The chain is OPA3-like protein from Dictyostelium discoideum (Social amoeba).